Here is a 160-residue protein sequence, read N- to C-terminus: uncharacterized protein (160 aa).

One can recognise an N-acetyltransferase domain in the interval 5–160 (ISLSFYKPEH…GEQLILHHFL (156 aa)).

This is an uncharacterized protein from Bacillus subtilis (strain 168).